Here is a 240-residue protein sequence, read N- to C-terminus: Endo-chitosanase B (240 aa).

The first 17 residues, 1–17 (MRLSEILAVALVTGATA), serve as a signal peptide directing secretion. A glycan (N-linked (GlcNAc...) asparagine) is linked at asparagine 86.

The protein belongs to the glycosyl hydrolase 75 family.

The protein localises to the secreted. It carries out the reaction Endohydrolysis of beta-(1-&gt;4)-linkages between D-glucosamine residues in a partly acetylated chitosan.. Its function is as follows. Chitosanase catalyzing the endo-type cleavage of chitosan, the deacylated form of chitin. Chitosanase may be crucial in the degradation of the deacetylated portion of chitin in the fungal cell wall. Chitoolisaccharides produced by the hydrolysis of partially N-acetylated chitosan are known to have many biological activities, including antibacterial activity, immune-enhancing effects, and elicitor activity. This is Endo-chitosanase B (csnB) from Aspergillus oryzae (Yellow koji mold).